Reading from the N-terminus, the 460-residue chain is ATP synthase subunit beta (460 aa).

150-157 contacts ATP; sequence GGAGVGKT.

The protein belongs to the ATPase alpha/beta chains family. As to quaternary structure, F-type ATPases have 2 components, CF(1) - the catalytic core - and CF(0) - the membrane proton channel. CF(1) has five subunits: alpha(3), beta(3), gamma(1), delta(1), epsilon(1). CF(0) has three main subunits: a(1), b(2) and c(9-12). The alpha and beta chains form an alternating ring which encloses part of the gamma chain. CF(1) is attached to CF(0) by a central stalk formed by the gamma and epsilon chains, while a peripheral stalk is formed by the delta and b chains.

It is found in the cell inner membrane. It carries out the reaction ATP + H2O + 4 H(+)(in) = ADP + phosphate + 5 H(+)(out). Functionally, produces ATP from ADP in the presence of a proton gradient across the membrane. The catalytic sites are hosted primarily by the beta subunits. This chain is ATP synthase subunit beta, found in Erwinia tasmaniensis (strain DSM 17950 / CFBP 7177 / CIP 109463 / NCPPB 4357 / Et1/99).